Consider the following 444-residue polypeptide: Methylenetetrahydrofolate--tRNA-(uracil-5-)-methyltransferase TrmFO (444 aa).

9–14 (GAGMAG) serves as a coordination point for FAD.

Belongs to the MnmG family. TrmFO subfamily. The cofactor is FAD.

It is found in the cytoplasm. It catalyses the reaction uridine(54) in tRNA + (6R)-5,10-methylene-5,6,7,8-tetrahydrofolate + NADH + H(+) = 5-methyluridine(54) in tRNA + (6S)-5,6,7,8-tetrahydrofolate + NAD(+). The catalysed reaction is uridine(54) in tRNA + (6R)-5,10-methylene-5,6,7,8-tetrahydrofolate + NADPH + H(+) = 5-methyluridine(54) in tRNA + (6S)-5,6,7,8-tetrahydrofolate + NADP(+). Catalyzes the folate-dependent formation of 5-methyl-uridine at position 54 (M-5-U54) in all tRNAs. In Cereibacter sphaeroides (strain ATCC 17023 / DSM 158 / JCM 6121 / CCUG 31486 / LMG 2827 / NBRC 12203 / NCIMB 8253 / ATH 2.4.1.) (Rhodobacter sphaeroides), this protein is Methylenetetrahydrofolate--tRNA-(uracil-5-)-methyltransferase TrmFO.